A 72-amino-acid polypeptide reads, in one-letter code: Translation initiation factor IF-1 (72 aa).

The S1-like domain maps to 1–72; it reads MAKEDCIEME…TKGRIKFRSK (72 aa).

It belongs to the IF-1 family. Component of the 30S ribosomal translation pre-initiation complex which assembles on the 30S ribosome in the order IF-2 and IF-3, IF-1 and N-formylmethionyl-tRNA(fMet); mRNA recruitment can occur at any time during PIC assembly.

The protein localises to the cytoplasm. Functionally, one of the essential components for the initiation of protein synthesis. Stabilizes the binding of IF-2 and IF-3 on the 30S subunit to which N-formylmethionyl-tRNA(fMet) subsequently binds. Helps modulate mRNA selection, yielding the 30S pre-initiation complex (PIC). Upon addition of the 50S ribosomal subunit IF-1, IF-2 and IF-3 are released leaving the mature 70S translation initiation complex. In Francisella tularensis subsp. novicida (strain U112), this protein is Translation initiation factor IF-1.